The primary structure comprises 357 residues: Protein RecA (357 aa).

69–76 (GPESSGKT) provides a ligand contact to ATP. The segment at 337-357 (SANSVAKNNEDDEDEDVEEEE) is disordered. Over residues 346–357 (EDDEDEDVEEEE) the composition is skewed to acidic residues.

This sequence belongs to the RecA family.

The protein localises to the cytoplasm. Functionally, can catalyze the hydrolysis of ATP in the presence of single-stranded DNA, the ATP-dependent uptake of single-stranded DNA by duplex DNA, and the ATP-dependent hybridization of homologous single-stranded DNAs. It interacts with LexA causing its activation and leading to its autocatalytic cleavage. In Nostoc sp. (strain PCC 7120 / SAG 25.82 / UTEX 2576), this protein is Protein RecA.